Here is a 48-residue protein sequence, read N- to C-terminus: Entericidin B (48 aa).

The first 21 residues, 1-21 (MVKKTIAAIFSVLVLSSVLTA), serve as a signal peptide directing secretion. The N-palmitoyl cysteine moiety is linked to residue Cys22. Cys22 carries S-diacylglycerol cysteine lipidation.

This sequence belongs to the EcnA/EcnB lipoprotein family.

It localises to the cell membrane. Plays a role in the bacteriolysis. Is activated under conditions of high osmolarity by the factor sigma S. Entericidin A functions as an antidote. This is Entericidin B (ecnB) from Citrobacter freundii.